A 219-amino-acid chain; its full sequence is 2-C-methyl-D-erythritol 4-phosphate cytidylyltransferase (219 aa).

This sequence belongs to the IspD/TarI cytidylyltransferase family. IspD subfamily.

It carries out the reaction 2-C-methyl-D-erythritol 4-phosphate + CTP + H(+) = 4-CDP-2-C-methyl-D-erythritol + diphosphate. It participates in isoprenoid biosynthesis; isopentenyl diphosphate biosynthesis via DXP pathway; isopentenyl diphosphate from 1-deoxy-D-xylulose 5-phosphate: step 2/6. Catalyzes the formation of 4-diphosphocytidyl-2-C-methyl-D-erythritol from CTP and 2-C-methyl-D-erythritol 4-phosphate (MEP). The chain is 2-C-methyl-D-erythritol 4-phosphate cytidylyltransferase from Bacteroides thetaiotaomicron (strain ATCC 29148 / DSM 2079 / JCM 5827 / CCUG 10774 / NCTC 10582 / VPI-5482 / E50).